The primary structure comprises 319 residues: Secreted effector protein sopD2 (319 aa).

The Required to target late endocytic compartments motif lies at 37-44; the sequence is WDRFKDCF.

The protein belongs to the SopD family.

Its subcellular location is the secreted. It localises to the host cell membrane. Effector proteins function to alter host cell physiology and promote bacterial survival in host tissues. Contributes to the formation of Salmonella-induced filaments (Sifs) in infected epithelial cells and to replication in macrophages. The polypeptide is Secreted effector protein sopD2 (sopD2) (Salmonella typhimurium (strain LT2 / SGSC1412 / ATCC 700720)).